The primary structure comprises 342 residues: Aquaporin-8 (342 aa).

Transmembrane regions (helical) follow at residues 55–75 (FLAV…AIFT), 98–118 (VAGG…FAVL), and 126–146 (CIFY…TMFA). The NPA 1 signature appears at 108–110 (NPA). N-linked (GlcNAc...) asparagine glycosylation occurs at N166. The next 2 helical transmembrane spans lie at 184–204 (TAFA…LAMC) and 215–235 (FLPI…SYNA). Positions 240 to 242 (NPS) match the NPA 2 motif. Residues 266 to 286 (YTWFFVPVLGSHCGAIIGGAI) form a helical membrane-spanning segment. Residues 302-327 (TNSVSSMSYNEDNSTLTKRKQVSNIV) show a composition bias toward polar residues. The interval 302–342 (TNSVSSMSYNEDNSTLTKRKQVSNIVHDSKGAKGSSTAPVN) is disordered. Residue N314 is glycosylated (N-linked (GlcNAc...) asparagine).

This sequence belongs to the MIP/aquaporin (TC 1.A.8) family.

It is found in the cell membrane. In terms of biological role, aquaglyceroporin that may modulate the water content and osmolytes during anhydrobiosis. The protein is Aquaporin-8 of Milnesium tardigradum (Water bear).